The chain runs to 473 residues: Chromosomal replication initiator protein DnaA (473 aa).

Positions 1-73 (MTNIEQDRWS…LSCWQAEMPQ (73 aa)) are domain I, interacts with DnaA modulators. Positions 73–129 (QVHRVDLTVRTAMRCAAPAKDAPAHAEPRRDDGRPAPELRATAIAPVSATHEALGGS) are domain II. Residues 130-352 (PLDPRLTFGS…GAINRLLAHS (223 aa)) are domain III, AAA+ region. Residues G177, G179, K180, and T181 each coordinate ATP. The interval 353–473 (KLNAQPVTLE…VELLKRQLQE (121 aa)) is domain IV, binds dsDNA.

The protein belongs to the DnaA family. Oligomerizes as a right-handed, spiral filament on DNA at oriC.

The protein resides in the cytoplasm. Its function is as follows. Plays an essential role in the initiation and regulation of chromosomal replication. ATP-DnaA binds to the origin of replication (oriC) to initiate formation of the DNA replication initiation complex once per cell cycle. Binds the DnaA box (a 9 base pair repeat at the origin) and separates the double-stranded (ds)DNA. Forms a right-handed helical filament on oriC DNA; dsDNA binds to the exterior of the filament while single-stranded (ss)DNA is stabiized in the filament's interior. The ATP-DnaA-oriC complex binds and stabilizes one strand of the AT-rich DNA unwinding element (DUE), permitting loading of DNA polymerase. After initiation quickly degrades to an ADP-DnaA complex that is not apt for DNA replication. Binds acidic phospholipids. The protein is Chromosomal replication initiator protein DnaA of Rhodopseudomonas palustris (strain BisB18).